The chain runs to 334 residues: Protein-methionine-sulfoxide reductase catalytic subunit MsrP (334 aa).

Positions 1–44 (MKKNQFLKESDVTAESVFFMKRRQVLKALGISAAALSLPHAAHA) form a signal peptide, tat-type signal. Residues Asn-88, 91-92 (YE), Cys-146, Thr-181, Asn-233, Arg-238, and 249-251 (GIK) contribute to the Mo-molybdopterin site.

This sequence belongs to the MsrP family. As to quaternary structure, heterodimer of a catalytic subunit (MsrP) and a heme-binding subunit (MsrQ). Mo-molybdopterin is required as a cofactor. Post-translationally, predicted to be exported by the Tat system. The position of the signal peptide cleavage has not been experimentally proven.

The protein localises to the periplasm. The enzyme catalyses L-methionyl-[protein] + a quinone + H2O = L-methionyl-(S)-S-oxide-[protein] + a quinol. The catalysed reaction is L-methionyl-[protein] + a quinone + H2O = L-methionyl-(R)-S-oxide-[protein] + a quinol. Functionally, part of the MsrPQ system that repairs oxidized periplasmic proteins containing methionine sulfoxide residues (Met-O), using respiratory chain electrons. Thus protects these proteins from oxidative-stress damage caused by reactive species of oxygen and chlorine generated by the host defense mechanisms. MsrPQ is essential for the maintenance of envelope integrity under bleach stress, rescuing a wide series of structurally unrelated periplasmic proteins from methionine oxidation, including the primary periplasmic chaperone SurA and the lipoprotein Pal. The catalytic subunit MsrP is non-stereospecific, being able to reduce both (R-) and (S-) diastereoisomers of methionine sulfoxide. In Escherichia coli O157:H7, this protein is Protein-methionine-sulfoxide reductase catalytic subunit MsrP.